The chain runs to 317 residues: Melanocyte-stimulating hormone receptor (317 aa).

Residues M1–E37 are Extracellular-facing. A glycan (N-linked (GlcNAc...) asparagine) is linked at N29. A helical membrane pass occupies residues V38–I63. At A64–P72 the chain is on the cytoplasmic side. The helical transmembrane segment at M73–L93 threads the bilayer. Over E94 to N118 the chain is Extracellular. Residues V119 to M140 form a helical membrane-spanning segment. The Cytoplasmic segment spans residues D141–R163. A helical membrane pass occupies residues I164–Y183. Topologically, residues N184–C191 are extracellular. A helical transmembrane segment spans residues L192 to L211. The Cytoplasmic portion of the chain corresponds to A212–A240. A helical membrane pass occupies residues A241–L266. Residues C267–N279 lie on the Extracellular side of the membrane. A helical transmembrane segment spans residues F280 to F300. Over R301–W317 the chain is Cytoplasmic. C315 carries S-palmitoyl cysteine lipidation.

This sequence belongs to the G-protein coupled receptor 1 family. Interacts with MGRN1, but does not undergo MGRN1-mediated ubiquitination; this interaction competes with GNAS-binding and thus inhibits agonist-induced cAMP production. Interacts with OPN3; the interaction results in a decrease in MC1R-mediated cAMP signaling and ultimately a decrease in melanin production in melanocytes.

It is found in the cell membrane. Its function is as follows. Receptor for MSH (alpha, beta and gamma) and ACTH. The activity of this receptor is mediated by G proteins which activate adenylate cyclase. Mediates melanogenesis, the production of eumelanin (black/brown) and phaeomelanin (red/yellow), via regulation of cAMP signaling in melanocytes. This chain is Melanocyte-stimulating hormone receptor (MC1R), found in Alces alces alces (European moose).